Reading from the N-terminus, the 411-residue chain is Translation initiation factor 2 subunit gamma (411 aa).

The tr-type G domain maps to 9–203; it reads QAEVNIGMVG…AIEDFIPTPK (195 aa). The interval 18-25 is G1; sequence GHVDHGKT. The Mg(2+) site is built by Asp-21, Thr-25, Gly-46, and Thr-48. 21–26 serves as a coordination point for GTP; it reads DHGKTT. The G2 stretch occupies residues 46-50; sequence GITIK. Cys-61, Cys-64, Cys-73, and Cys-76 together coordinate Zn(2+). Positions 90–93 are G3; sequence DAPG. Residues 146–149 and 181–183 contribute to the GTP site; these read NKIE and SAL. Residues 146–149 form a G4 region; sequence NKIE. The tract at residues 181–183 is G5; it reads SAL.

This sequence belongs to the TRAFAC class translation factor GTPase superfamily. Classic translation factor GTPase family. EIF2G subfamily. As to quaternary structure, heterotrimer composed of an alpha, a beta and a gamma chain. It depends on Mg(2+) as a cofactor.

It catalyses the reaction GTP + H2O = GDP + phosphate + H(+). EIF-2 functions in the early steps of protein synthesis by forming a ternary complex with GTP and initiator tRNA. This chain is Translation initiation factor 2 subunit gamma, found in Pyrococcus horikoshii (strain ATCC 700860 / DSM 12428 / JCM 9974 / NBRC 100139 / OT-3).